Here is a 535-residue protein sequence, read N- to C-terminus: RAN GTPase-activating protein 1 (535 aa).

Residues 1 to 115 (MDHSAKTTQN…EESEVEVSKD (115 aa)) are WPP. LRR repeat units lie at residues 208-231 (GSKL…AFAS), 236-259 (QHDL…AVRE), 264-287 (TDKI…AIAE), 320-343 (CSHL…ALAK), 353-376 (EIYM…LLKS), 377-400 (APSL…NLAA), 405-428 (KQSL…LIAK), 433-456 (HDQL…ALAQ), and 461-488 (KNTF…MFKD). The tract at residues 493–535 (LVPLDDNDPEGEDFEDEDEEEEGEDGNELESKLGSLKIKQGEE) is disordered. The span at 497–520 (DDNDPEGEDFEDEDEEEEGEDGNE) shows a compositional bias: acidic residues.

Belongs to the RNA1 family. As to quaternary structure, homodimer. Interacts with WIP1 through its WPP domain. Component of Ran complexes at least composed of WIT1 or WIT2, RANGAP1 or RANGAP2, and WIP1 or WIP2 or WIP3. Interacts directly with WIT1, WIP2 and WIP3. Interacts with POK1.

Its subcellular location is the cytoplasm. It is found in the nucleus envelope. The protein localises to the nucleus membrane. It localises to the cytoskeleton. The protein resides in the spindle. Its subcellular location is the phragmoplast. Its function is as follows. GTPase activator for the nuclear Ras-related regulatory protein Ran, converting it to the putatively inactive GDP-bound state. Plays a role in spatial signaling during cell division. This Arabidopsis thaliana (Mouse-ear cress) protein is RAN GTPase-activating protein 1 (RANGAP1).